The following is a 489-amino-acid chain: Ulvan Lyase-PL25 (489 aa).

Residues 1 to 31 form the signal peptide; sequence MNLNKTLRKNSPSGYKALLTFSIICGLMATG. Residue Cys32 is the site of N-palmitoyl cysteine attachment. Cys32 carries the S-diacylglycerol cysteine lipid modification. Substrate is bound by residues Asn60 and Asn122. His123 serves as the catalytic Proton donor. Positions 125 and 143 each coordinate substrate. Residue Tyr188 is the Proton acceptor of the active site. Substrate contacts are provided by Arg204, His208, and Tyr246. His208 serves as a coordination point for Zn(2+). Zn(2+)-binding residues include His264, Cys266, and His278. His278 serves as a coordination point for substrate.

It belongs to the polysaccharide lyase 25 family.

The protein resides in the cell membrane. Ulvan lyase involved in ulvan degradation. Ulvan is the main polysaccharide component of the Ulvales (green seaweed) cell wall. It is composed of disaccharide building blocks comprising 3-sulfated rhamnose (Rha3S) linked to D-glucuronic acid (GlcA), L-iduronic acid (IduA), or D-xylose (Xyl). Ulvan lyase catalyzes the endolytic cleavage of the glycosidic bond between Rha3S and the uronic acids GlcA or IduA, producing oligosaccharides that have unsaturated 4-deoxy-L-threo-hex-4-enopyranosiduronic acid (deltaUA) at the non-reducing end. This results eventually in the degradation of the ulvan polysaccharide into deltaUA-Rha3S disaccharides and deltaUA-Rha3S-Xyl-Rha3S tetrasaccharides. In Pseudoalteromonas sp. (strain PLSV), this protein is Ulvan Lyase-PL25.